A 372-amino-acid chain; its full sequence is MEVIQPTTQIFADNEKTVSQVAEEISSNELRETTVYLPDLFVSFCSRAPKTNPYYAEVKAESDAWFAKLYSLSTEKELSRLTKADFALFAAWWTADAGKSEFRTICDWCNWVFYFDDQFDEGHLCEDEAKAQREADILTQIMTVGLRDDEYPDDLPRARALRYAFRSVWERISQRASAGVQRRFREAMQEFCKGLVGQVGVRADIDTRELDPYLAFRRQSIGVVPCIVFAEYYHDLRLPDEFFEHPSVKTIMDLAAEITVLHNDVLSYHKEYEMGAIHNIVIILRERGMTQQEAYNETDKLIQKRLREWHLAVNQLPFYGEALDLQVQKFVQACQEVAVGNLHWSFATERYFGNQNNLIRKTRQVELIDLKA.

Mg(2+) contacts are provided by aspartate 116, glutamate 121, asparagine 263, serine 267, and glutamate 271. The DDXXE motif motif lies at 116–121; sequence DDQFDE.

The protein belongs to the terpene synthase family. Mg(2+) is required as a cofactor.

It catalyses the reaction (2E,6E)-farnesyl diphosphate = silphinene + diphosphate. The protein operates within secondary metabolite biosynthesis; terpenoid biosynthesis. Functionally, sesquiterpene cyclase; part of the gene cluster that mediates the biosynthesis of penifulvin A, a potent insecticidal sesquiterpene that features a [5.5.5.6]dioxafenestrane ring. Within the pathway, peniA catalyzes the first step and generates the angular triquinane scaffold silphinene via cyclization of the linear farnesyl pyrophosphate (FPP). The cytochrome P450 monooxygenase peniB and the flavin-dependent monooxygenase peniC then catalyze a series of oxidation reactions to transform silphinene into penifulvin A. The polypeptide is Silphinene synthase peniA (Penicillium patulum (Penicillium griseofulvum)).